Here is a 762-residue protein sequence, read N- to C-terminus: uncharacterized protein (762 aa).

The disordered stretch occupies residues 734–762; the sequence is QQRPRVAAAAPPPPPQPPAAAVPTTQAST. Over residues 743 to 753 the composition is skewed to pro residues; sequence APPPPPQPPAA.

This is an uncharacterized protein from Ostreid herpesvirus 1 (isolate France) (OsHV-1).